Consider the following 331-residue polypeptide: NADH-quinone oxidoreductase subunit H (331 aa).

The next 8 membrane-spanning stretches (helical) occupy residues 7–27 (ALVT…AVVI), 81–101 (MIFT…FAIV), 114–134 (IGIL…LFAG), 154–174 (ISYE…VGSF), 187–207 (VWFI…GVAV), 238–258 (FFVG…TLFF), 271–291 (WLSF…FILI), and 310–330 (VCLP…LAAA).

This sequence belongs to the complex I subunit 1 family. NDH-1 is composed of 13 different subunits. Subunits NuoA, H, J, K, L, M, N constitute the membrane sector of the complex.

The protein resides in the cell inner membrane. It carries out the reaction a quinone + NADH + 5 H(+)(in) = a quinol + NAD(+) + 4 H(+)(out). Its function is as follows. NDH-1 shuttles electrons from NADH, via FMN and iron-sulfur (Fe-S) centers, to quinones in the respiratory chain. The immediate electron acceptor for the enzyme in this species is believed to be ubiquinone. Couples the redox reaction to proton translocation (for every two electrons transferred, four hydrogen ions are translocated across the cytoplasmic membrane), and thus conserves the redox energy in a proton gradient. This subunit may bind ubiquinone. The protein is NADH-quinone oxidoreductase subunit H of Pseudomonas aeruginosa (strain ATCC 15692 / DSM 22644 / CIP 104116 / JCM 14847 / LMG 12228 / 1C / PRS 101 / PAO1).